A 738-amino-acid chain; its full sequence is MQPRWAQGATMWLGVLLTLLLCSSLEGQENSFTINSVDMKSLPDWTVQNGKNLTLQCFADVSTTSHVKPQHQMLFYKDDVLFYNISSMKSTESYFIPEVRIYDSGTYKCTVIVNNKEKTTAEYQVLVEGVPSPRVTLDKKEAIQGGIVRVNCSVPEEKAPIHFTIEKLELNEKMVKLKREKNSRDQNFVILEFPVEEQDRVLSFRCQARIISGIHMQTSESTKSELVTVTESFSTPKFHISPTGMIMEGAQLHIKCTIQVTHLAQEFPEIIIQKDKAIVAHNRHGNKAVYSVMAMVEHSGNYTCKVESSRISKVSSIVVNITELFSKPELESSFTHLDQGERLNLSCSIPGAPPANFTIQKEDTIVSQTQDFTKIASKSDSGTYICTAGIDKVVKKSNTVQIVVCEMLSQPRISYDAQFEVIKGQTIEVRCESISGTLPISYQLLKTSKVLENSTKNSNDPAVFKDNPTEDVEYQCVADNCHSHAKMLSEVLRVKVIAPVDEVQISILSSKVVESGEDIVLQCAVNEGSGPITYKFYREKEGKPFYQMTSNATQAFWTKQKASKEQEGEYYCTAFNRANHASSVPRSKILTVRVILAPWKKGLIAVVIIGVIIALLIIAAKCYFLRKAKAKQMPVEMSRPAVPLLNSNNEKMSDPNMEANSHYGHNDDVRNHAMKPINDNKEPLNSDVQYTEVQVSSAESHKDLGKKDTETVYSEVRKAVPDAVESRYSRTEGSLDGT.

The N-terminal stretch at 1-27 (MQPRWAQGATMWLGVLLTLLLCSSLEG) is a signal peptide. The Extracellular segment spans residues 28–601 (QENSFTINSV…VRVILAPWKK (574 aa)). 3 consecutive Ig-like C2-type domains span residues 35 to 121 (NSVD…KTTA), 145 to 233 (GGIV…TESF), and 236 to 315 (PKFH…SKVS). Asn-52, Asn-84, and Asn-151 each carry an N-linked (GlcNAc...) asparagine glycan. Cysteines 57 and 109 form a disulfide. 2 disulfides stabilise this stretch: Cys-152–Cys-206 and Cys-256–Cys-304. N-linked (GlcNAc...) asparagine glycosylation is found at Asn-301, Asn-320, Asn-344, Asn-356, Asn-453, and Asn-551. Ig-like C2-type domains lie at 328-401 (PELE…NTVQ), 424-493 (GQTI…EVLR), and 499-591 (PVDE…KILT). 3 disulfide bridges follow: Cys-347–Cys-386, Cys-431–Cys-476, and Cys-523–Cys-572. The helical transmembrane segment at 602-620 (GLIAVVIIGVIIALLIIAA) threads the bilayer. Topologically, residues 621–738 (KCYFLRKAKA…SRTEGSLDGT (118 aa)) are cytoplasmic. A lipid anchor (S-palmitoyl cysteine) is attached at Cys-622. The interval 658–715 (EANSHYGHNDDVRNHAMKPINDNKEPLNSDVQYTEVQVSSAESHKDLGKKDTETVYSE) is disordered. Over residues 686–698 (SDVQYTEVQVSSA) the composition is skewed to polar residues. 2 short sequence motifs (ITIM motif) span residues 688-693 (VQYTEV) and 711-716 (TVYSEV). 2 positions are modified to phosphotyrosine; by FER: Tyr-690 and Tyr-713. The segment covering 699–715 (ESHKDLGKKDTETVYSE) has biased composition (basic and acidic residues). Positions 709-729 (TETVYSEVRKAVPDAVESRYS) are membrane-bound segment which detaches upon phosphorylation. Residues 721 to 738 (PDAVESRYSRTEGSLDGT) form a may play a role in cytoprotective signaling region. Ser-729 and Ser-734 each carry phosphoserine.

Trans-homodimer (via Ig-like C2-type 1 and Ig-like C2-type 2 domains); trans-homodimerization is required for cell-cell interaction. Forms a complex with BDKRB2 and GNAQ. Interacts with BDKRB2 and GNAQ. Interacts with PTPN11; Tyr-713 is critical for PTPN11 recruitment. Interacts with FER. Interacts (via Ig-like C2-type domain 6) with CD177; the interaction is Ca(2+)-dependent; the interaction is direct. In terms of processing, phosphorylated on Ser and Tyr residues after cellular activation by src kinases. Upon activation, phosphorylated on Ser-729 which probably initiates the dissociation of the membrane-interaction segment (residues 709-729) from the cell membrane allowing the sequential phosphorylation of Tyr-713 and Tyr-690. Constitutively phosphorylated on Ser-734 in resting platelets. Phosphorylated on tyrosine residues by FER and FES in response to FCER1 activation. In endothelial cells Fyn mediates mechanical-force (stretch or pull) induced tyrosine phosphorylation. Post-translationally, palmitoylation by ZDHHC21 is necessary for cell surface expression in endothelial cells and enrichment in membrane rafts. Expressed on platelets and leukocytes and is primarily concentrated at the borders between endothelial cells. Expressed in human umbilical vein endothelial cells (HUVECs) (at protein level). Expressed on neutrophils (at protein level). Isoform Long predominates in all tissues examined. Isoform Delta12 is detected only in trachea. Isoform Delta14-15 is only detected in lung. Isoform Delta14 is detected in all tissues examined with the strongest expression in heart. Isoform Delta15 is expressed in brain, testis, ovary, cell surface of platelets, human umbilical vein endothelial cells (HUVECs), Jurkat T-cell leukemia, human erythroleukemia (HEL) and U-937 histiocytic lymphoma cell lines (at protein level).

It localises to the cell membrane. The protein resides in the membrane raft. It is found in the cell junction. In terms of biological role, cell adhesion molecule which is required for leukocyte transendothelial migration (TEM) under most inflammatory conditions. Tyr-690 plays a critical role in TEM and is required for efficient trafficking of PECAM1 to and from the lateral border recycling compartment (LBRC) and is also essential for the LBRC membrane to be targeted around migrating leukocytes. Trans-homophilic interaction may play a role in endothelial cell-cell adhesion via cell junctions. Heterophilic interaction with CD177 plays a role in transendothelial migration of neutrophils. Homophilic ligation of PECAM1 prevents macrophage-mediated phagocytosis of neighboring viable leukocytes by transmitting a detachment signal. Promotes macrophage-mediated phagocytosis of apoptotic leukocytes by tethering them to the phagocytic cells; PECAM1-mediated detachment signal appears to be disabled in apoptotic leukocytes. Modulates bradykinin receptor BDKRB2 activation. Regulates bradykinin- and hyperosmotic shock-induced ERK1/2 activation in endothelial cells. Induces susceptibility to atherosclerosis. Functionally, does not protect against apoptosis. The sequence is that of Platelet endothelial cell adhesion molecule (PECAM1) from Homo sapiens (Human).